A 225-amino-acid polypeptide reads, in one-letter code: Urease accessory protein UreF (225 aa).

The protein belongs to the UreF family. As to quaternary structure, ureD, UreF and UreG form a complex that acts as a GTP-hydrolysis-dependent molecular chaperone, activating the urease apoprotein by helping to assemble the nickel containing metallocenter of UreC. The UreE protein probably delivers the nickel.

The protein resides in the cytoplasm. In terms of biological role, required for maturation of urease via the functional incorporation of the urease nickel metallocenter. The polypeptide is Urease accessory protein UreF (Picosynechococcus sp. (strain ATCC 27264 / PCC 7002 / PR-6) (Agmenellum quadruplicatum)).